The sequence spans 413 residues: Probable cysteine desulfurase (413 aa).

Lys229 carries the N6-(pyridoxal phosphate)lysine modification. Cys368 acts as the Cysteine persulfide intermediate in catalysis.

It belongs to the class-V pyridoxal-phosphate-dependent aminotransferase family. Csd subfamily. The cofactor is pyridoxal 5'-phosphate.

The enzyme catalyses (sulfur carrier)-H + L-cysteine = (sulfur carrier)-SH + L-alanine. In terms of biological role, catalyzes the removal of elemental sulfur and selenium atoms from L-cysteine, L-cystine, L-selenocysteine, and L-selenocystine to produce L-alanine. This Staphylococcus epidermidis (strain ATCC 12228 / FDA PCI 1200) protein is Probable cysteine desulfurase (csd).